Reading from the N-terminus, the 673-residue chain is tRNA 5-methylaminomethyl-2-thiouridine biosynthesis bifunctional protein MnmC (673 aa).

Residues 1-245 form a tRNA (mnm(5)s(2)U34)-methyltransferase region; that stretch reads MSHAPIQTAA…KREMLIGELP (245 aa). Residues 272 to 673 are FAD-dependent cmnm(5)s(2)U34 oxidoreductase; that stretch reads IGGGVASALT…VRKLLKGRAV (402 aa).

It in the N-terminal section; belongs to the methyltransferase superfamily. tRNA (mnm(5)s(2)U34)-methyltransferase family. The protein in the C-terminal section; belongs to the DAO family. Requires FAD as cofactor.

Its subcellular location is the cytoplasm. The enzyme catalyses 5-aminomethyl-2-thiouridine(34) in tRNA + S-adenosyl-L-methionine = 5-methylaminomethyl-2-thiouridine(34) in tRNA + S-adenosyl-L-homocysteine + H(+). Functionally, catalyzes the last two steps in the biosynthesis of 5-methylaminomethyl-2-thiouridine (mnm(5)s(2)U) at the wobble position (U34) in tRNA. Catalyzes the FAD-dependent demodification of cmnm(5)s(2)U34 to nm(5)s(2)U34, followed by the transfer of a methyl group from S-adenosyl-L-methionine to nm(5)s(2)U34, to form mnm(5)s(2)U34. The polypeptide is tRNA 5-methylaminomethyl-2-thiouridine biosynthesis bifunctional protein MnmC (Serratia proteamaculans (strain 568)).